The primary structure comprises 64 residues: DNA-binding protein 7a (64 aa).

It belongs to the 7 kDa DNA-binding/endoribonuclease P2 family. In terms of assembly, monomer.

It localises to the cytoplasm. Can constrain negative DNA supercoils. May be involved in maintaining the integrity of the genome at high temperature. In Saccharolobus islandicus (strain L.D.8.5 / Lassen #2) (Sulfolobus islandicus), this protein is DNA-binding protein 7a.